Consider the following 444-residue polypeptide: Argininosuccinate synthase (444 aa).

Residues 17–25 (AFSGGLDTS) and alanine 43 each bind ATP. Tyrosine 99 contributes to the L-citrulline binding site. The ATP site is built by glycine 129 and threonine 131. 3 residues coordinate L-aspartate: threonine 131, asparagine 135, and aspartate 136. Asparagine 135 is a binding site for L-citrulline. An ATP-binding site is contributed by aspartate 136. L-citrulline contacts are provided by arginine 139 and serine 192. An ATP-binding site is contributed by aspartate 194. 3 residues coordinate L-citrulline: threonine 201, glutamate 203, and glutamate 280.

This sequence belongs to the argininosuccinate synthase family. Type 2 subfamily. Homotetramer.

Its subcellular location is the cytoplasm. It catalyses the reaction L-citrulline + L-aspartate + ATP = 2-(N(omega)-L-arginino)succinate + AMP + diphosphate + H(+). The protein operates within amino-acid biosynthesis; L-arginine biosynthesis; L-arginine from L-ornithine and carbamoyl phosphate: step 2/3. In Burkholderia lata (strain ATCC 17760 / DSM 23089 / LMG 22485 / NCIMB 9086 / R18194 / 383), this protein is Argininosuccinate synthase.